The following is a 349-amino-acid chain: Probable arabinogalactan endo-beta-1,4-galactanase A (349 aa).

The N-terminal stretch at 1-15 is a signal peptide; that stretch reads MLLSFLPLLPLATAA. Asparagine 126 is a glycosylation site (N-linked (GlcNAc...) asparagine). Residue glutamate 150 is the Proton donor of the active site. Glutamate 261 serves as the catalytic Nucleophile.

The protein belongs to the glycosyl hydrolase 53 family.

It localises to the secreted. It carries out the reaction The enzyme specifically hydrolyzes (1-&gt;4)-beta-D-galactosidic linkages in type I arabinogalactans.. Functionally, endogalactanase involved in the degradation of plant cell wall polysaccharides, and more particularly of hairy regions of pectin. The protein is Probable arabinogalactan endo-beta-1,4-galactanase A (galA) of Aspergillus terreus (strain NIH 2624 / FGSC A1156).